The chain runs to 377 residues: MTSKLLPLLLNLIFLFFFPLLNASEQKPCYSFSCSQESVVARFPFSLFSYQPESCGYSGFNLICKDDANTTLKLPKSEPFLVKEIDYETQRIRLNDPENCLARRLLNFDPSGSPFSFLRSRNYTFLICPKEANITASFRAIDCLGNTTSSFFVVQFENLGSMPSSCHIFKILPLPFSWFVAYTTYPDGQNSRDMWLKWDSPDCRDCERRTNSRCGFKNNTSHQVECFSSVNPGLHNTGLQVLKIMCLSLVGPLTALTFCVGLVMCSSERVSSQIQQAVVARLSGSVTSQPSNEVARIGLDESTIESYKKVELGESRRLPTGSNDVVCPICLSEYATKETVRCLPECEHCFHTECIDAWLKLHSSCPVCRSNPSPLRD.

The N-terminal stretch at 1–23 (MTSKLLPLLLNLIFLFFFPLLNA) is a signal peptide. The helical transmembrane segment at 244–264 (IMCLSLVGPLTALTFCVGLVM) threads the bilayer. An RING-type; atypical zinc finger spans residues 327–369 (CPICLSEYATKETVRCLPECEHCFHTECIDAWLKLHSSCPVCR).

The protein belongs to the RING-type zinc finger family. ATL subfamily.

The protein resides in the membrane. The catalysed reaction is S-ubiquitinyl-[E2 ubiquitin-conjugating enzyme]-L-cysteine + [acceptor protein]-L-lysine = [E2 ubiquitin-conjugating enzyme]-L-cysteine + N(6)-ubiquitinyl-[acceptor protein]-L-lysine.. It functions in the pathway protein modification; protein ubiquitination. This is RING-H2 finger protein ATL22 (ATL22) from Arabidopsis thaliana (Mouse-ear cress).